We begin with the raw amino-acid sequence, 199 residues long: Probable GTP-binding protein EngB (199 aa).

The EngB-type G domain occupies 28-199 (DLPEIALAGR…DSWDAILEQV (172 aa)). GTP is bound by residues 36–43 (GRSNVGKS), 63–67 (GKTQL), 81–84 (DVPG), 148–151 (TKAD), and 180–182 (FSS). Residues Ser43 and Thr65 each contribute to the Mg(2+) site.

Belongs to the TRAFAC class TrmE-Era-EngA-EngB-Septin-like GTPase superfamily. EngB GTPase family. Mg(2+) serves as cofactor.

Functionally, necessary for normal cell division and for the maintenance of normal septation. This is Probable GTP-binding protein EngB from Streptococcus pyogenes serotype M1.